The following is a 166-amino-acid chain: MSLLTPDSGLLFWMIVSFGIVFVILSKYGFPVIVKAIEQRKAYIDNSLETARQANERLAHIQAEGEKMLAEAKEKQNAVLKEAFAEKERIIEEARKKAVSEAHLQIEEATRRIREEKEKAIREVRSEIADLSIAIAEKVMKEKIGRDKEQQQMIDRLLDEVSFSKS.

Residues 10–30 form a helical membrane-spanning segment; it reads LLFWMIVSFGIVFVILSKYGF.

The protein belongs to the ATPase B chain family. As to quaternary structure, F-type ATPases have 2 components, F(1) - the catalytic core - and F(0) - the membrane proton channel. F(1) has five subunits: alpha(3), beta(3), gamma(1), delta(1), epsilon(1). F(0) has three main subunits: a(1), b(2) and c(10-14). The alpha and beta chains form an alternating ring which encloses part of the gamma chain. F(1) is attached to F(0) by a central stalk formed by the gamma and epsilon chains, while a peripheral stalk is formed by the delta and b chains.

The protein localises to the cell inner membrane. Its function is as follows. F(1)F(0) ATP synthase produces ATP from ADP in the presence of a proton or sodium gradient. F-type ATPases consist of two structural domains, F(1) containing the extramembraneous catalytic core and F(0) containing the membrane proton channel, linked together by a central stalk and a peripheral stalk. During catalysis, ATP synthesis in the catalytic domain of F(1) is coupled via a rotary mechanism of the central stalk subunits to proton translocation. Functionally, component of the F(0) channel, it forms part of the peripheral stalk, linking F(1) to F(0). This chain is ATP synthase subunit b, found in Parabacteroides distasonis (strain ATCC 8503 / DSM 20701 / CIP 104284 / JCM 5825 / NCTC 11152).